Consider the following 509-residue polypeptide: Sperm-associated antigen 6 (509 aa).

8 ARM repeats span residues 31-70 (PQNIETLQNAGVMSLLRTLLLDVVPTIQQTAALALGRLAN), 73-112 (DDLAEAVVKCDILPQLVYSLAEQNRFYKKAAAFVLRAVGK), 115-154 (PQLAQAIVDCGALDTLVICLEDFDPGVKEAAAWALRYIAR), 157-196 (AELSQAVVDAGAVPLLVLCIQEPEIALKRIAASALSDIAK), 199-238 (PELAQTVVDAGAVAHLAQMILNPDAKLKHQILSALSQVSK), 241-280 (VDLAEMVVEAEIFPVVLTCLKDKDEYVKKNASTLIREIAK), 325-365 (ENLA…QIGR), and 368-409 (PEHA…NILQ).

As to quaternary structure, interacts with SPAG16 and SPAG17. Highly expressed in testis.

Its subcellular location is the cytoplasm. It localises to the cytoskeleton. The protein localises to the cell projection. It is found in the cilium. The protein resides in the flagellum. Its subcellular location is the cilium axoneme. Functionally, important for structural integrity of the central apparatus in the sperm tail and for flagellar motility. This is Sperm-associated antigen 6 (SPAG6) from Homo sapiens (Human).